The sequence spans 161 residues: Allophycocyanin subunit alpha-B (161 aa).

N4-methylasparagine is present on Asn71. Position 81 (Cys81) interacts with (2R,3E)-phycocyanobilin.

It belongs to the phycobiliprotein family. As to quaternary structure, heterodimer of an alpha-B and a beta chain forming AP-B. In terms of processing, contains one covalently linked bilin chromophore. The chromophore is added by phycocyanobilin lyase CpcUS.

Its subcellular location is the cellular thylakoid membrane. A variant alpha-allophycocyanin (AP) which forms a complex with beta-AP with maximum absorption at approximately 670 nanometers. It is an important phycobilisome terminal emitter involved in energy transfer to photosystem I. The polypeptide is Allophycocyanin subunit alpha-B (apcD) (Picosynechococcus sp. (strain ATCC 27264 / PCC 7002 / PR-6) (Agmenellum quadruplicatum)).